The primary structure comprises 168 residues: MAPQNMPAVSIDINMFWQIINFLILMFFFKKYFQKPIAKVLDARKEKIANDLKQAEIDKEMAAKANGEAQGIVKSAKTEANEMLLRAEKKADERKETILKEANTQREKMLKSAEVEIEKMKEQARKELQLEVTDLAVKLAEKMINEKVDAKIGANLLDQFIGEVGEEK.

A helical membrane pass occupies residues 9–29 (VSIDINMFWQIINFLILMFFF).

The protein belongs to the ATPase B chain family. In terms of assembly, F-type ATPases have 2 components, F(1) - the catalytic core - and F(0) - the membrane proton channel. F(1) has five subunits: alpha(3), beta(3), gamma(1), delta(1), epsilon(1). F(0) has three main subunits: a(1), b(2) and c(10-14). The alpha and beta chains form an alternating ring which encloses part of the gamma chain. F(1) is attached to F(0) by a central stalk formed by the gamma and epsilon chains, while a peripheral stalk is formed by the delta and b chains.

It localises to the cell inner membrane. Its function is as follows. F(1)F(0) ATP synthase produces ATP from ADP in the presence of a proton or sodium gradient. F-type ATPases consist of two structural domains, F(1) containing the extramembraneous catalytic core and F(0) containing the membrane proton channel, linked together by a central stalk and a peripheral stalk. During catalysis, ATP synthesis in the catalytic domain of F(1) is coupled via a rotary mechanism of the central stalk subunits to proton translocation. Component of the F(0) channel, it forms part of the peripheral stalk, linking F(1) to F(0). The chain is ATP synthase subunit b, sodium ion specific (atpF) from Propionigenium modestum.